The following is a 139-amino-acid chain: Actin-depolymerizing factor 1 (139 aa).

Residues 5 to 139 (SSGLAVNDEC…SLDIVRSRTN (135 aa)) form the ADF-H domain.

Belongs to the actin-binding proteins ADF family. In terms of tissue distribution, expressed in pollen.

In terms of biological role, actin-depolymerizing protein. Severs actin filaments (F-actin) and binds to actin monomers. This Zea mays (Maize) protein is Actin-depolymerizing factor 1 (ADF1).